A 559-amino-acid polypeptide reads, in one-letter code: NXPE family member 3 (559 aa).

A signal peptide spans 1 to 30 (MWTNFFKLRLFCCLLAVLMVVVLVVNVTQV). 3 N-linked (GlcNAc...) asparagine glycosylation sites follow: N26, N237, and N346.

This sequence belongs to the NXPE family.

It localises to the secreted. The chain is NXPE family member 3 (NXPE3) from Pongo abelii (Sumatran orangutan).